A 336-amino-acid polypeptide reads, in one-letter code: tRNA N6-adenosine threonylcarbamoyltransferase (336 aa).

Residues His-112 and His-116 each coordinate Fe cation. Substrate contacts are provided by residues 136-140 (LVSGG), Asp-169, Gly-182, and Asn-276. Asp-304 is a binding site for Fe cation.

The protein belongs to the KAE1 / TsaD family. Fe(2+) serves as cofactor.

Its subcellular location is the cytoplasm. The enzyme catalyses L-threonylcarbamoyladenylate + adenosine(37) in tRNA = N(6)-L-threonylcarbamoyladenosine(37) in tRNA + AMP + H(+). Functionally, required for the formation of a threonylcarbamoyl group on adenosine at position 37 (t(6)A37) in tRNAs that read codons beginning with adenine. Is involved in the transfer of the threonylcarbamoyl moiety of threonylcarbamoyl-AMP (TC-AMP) to the N6 group of A37, together with TsaE and TsaB. TsaD likely plays a direct catalytic role in this reaction. The chain is tRNA N6-adenosine threonylcarbamoyltransferase from Francisella tularensis subsp. holarctica (strain FTNF002-00 / FTA).